Here is a 244-residue protein sequence, read N- to C-terminus: tRNA (guanine-N(1)-)-methyltransferase (244 aa).

Residues Gly-112 and 131–136 (LGDFIL) each bind S-adenosyl-L-methionine. Positions 211–244 (IKRTSDRRPDLLEKWQQEKKPGSREQGSREQGEK) are disordered.

Belongs to the RNA methyltransferase TrmD family. In terms of assembly, homodimer.

The protein resides in the cytoplasm. The catalysed reaction is guanosine(37) in tRNA + S-adenosyl-L-methionine = N(1)-methylguanosine(37) in tRNA + S-adenosyl-L-homocysteine + H(+). Functionally, specifically methylates guanosine-37 in various tRNAs. The sequence is that of tRNA (guanine-N(1)-)-methyltransferase from Trichormus variabilis (strain ATCC 29413 / PCC 7937) (Anabaena variabilis).